An 890-amino-acid polypeptide reads, in one-letter code: Alanine--tRNA ligase (890 aa).

Zn(2+) contacts are provided by H568, H572, C680, and H684.

Belongs to the class-II aminoacyl-tRNA synthetase family. The cofactor is Zn(2+).

The protein localises to the cytoplasm. It carries out the reaction tRNA(Ala) + L-alanine + ATP = L-alanyl-tRNA(Ala) + AMP + diphosphate. Functionally, catalyzes the attachment of alanine to tRNA(Ala) in a two-step reaction: alanine is first activated by ATP to form Ala-AMP and then transferred to the acceptor end of tRNA(Ala). Also edits incorrectly charged Ser-tRNA(Ala) and Gly-tRNA(Ala) via its editing domain. The protein is Alanine--tRNA ligase of Psychrobacter cryohalolentis (strain ATCC BAA-1226 / DSM 17306 / VKM B-2378 / K5).